A 608-amino-acid chain; its full sequence is FAD-binding monooxygenase ktnD (608 aa).

The N-linked (GlcNAc...) asparagine glycan is linked to Asn-4. A helical membrane pass occupies residues 17–37; that stretch reads ATVVIIGAGVSGMCMAIDLLH. FAD contacts are provided by residues 56 to 59, 68 to 69, and Tyr-74; these read TWAN and DV. Residue 66-68 participates in NADP(+) binding; sequence ASD. Residue Asn-114 is glycosylated (N-linked (GlcNAc...) asparagine). NADP(+) is bound by residues 201–207 and 224–225; these read NGASAIQ and RS. The N-linked (GlcNAc...) asparagine glycan is linked to Asn-325. A helical transmembrane segment spans residues 535–555; the sequence is ALVSNVTLFLGVALAAGGVYW.

It belongs to the FAD-binding monooxygenase family. FAD serves as cofactor.

It localises to the membrane. Its function is as follows. Non-reducing polyketide synthase; part of the gene cluster that mediates the biosynthesis of the bicoumarin kotanin. The non-reducing polyketide synthase ktnS first catalyzes the formation of the pentaketidic 4,7-dihydroxy-5-methylcoumarin from acetyl coenzyme A and 4 malonyl coenzyme A molecules. Further O-methylation by ktnB leads to the formation of 7-demethylsiderin. Then, an oxidative phenol coupling catalyzed by the cytochrome P450 monooxygenase ktnC forms the 8,8'-dimer P-orlandin via dimerization the monomeric precursor, 7-demethylsiderin. P-orlandin is subsequently O-methylated in a stepwise fashion to demethylkotanin and kotanin. The function of ktnD within the pathway has not been determined yet. The protein is FAD-binding monooxygenase ktnD of Aspergillus niger (strain ATCC MYA-4892 / CBS 513.88 / FGSC A1513).